A 168-amino-acid chain; its full sequence is Peptide deformylase (168 aa).

Fe cation-binding residues include C92 and H134. The active site involves E135. Position 138 (H138) interacts with Fe cation.

The protein belongs to the polypeptide deformylase family. Requires Fe(2+) as cofactor.

The enzyme catalyses N-terminal N-formyl-L-methionyl-[peptide] + H2O = N-terminal L-methionyl-[peptide] + formate. In terms of biological role, removes the formyl group from the N-terminal Met of newly synthesized proteins. Requires at least a dipeptide for an efficient rate of reaction. N-terminal L-methionine is a prerequisite for activity but the enzyme has broad specificity at other positions. In Teredinibacter turnerae (strain ATCC 39867 / T7901), this protein is Peptide deformylase.